A 195-amino-acid chain; its full sequence is FK506-binding protein 2 (195 aa).

The first 19 residues, 1 to 19, serve as a signal peptide directing secretion; it reads MKAALFLSALASTAVGVVA. A PPIase FKBP-type domain is found at 39 to 127; it reads GDGVHMHYRG…VFETELVGID (89 aa). The Prevents secretion from ER signature appears at 192–195; that stretch reads HEEL.

It belongs to the FKBP-type PPIase family. FKBP2 subfamily.

The protein resides in the endoplasmic reticulum. The catalysed reaction is [protein]-peptidylproline (omega=180) = [protein]-peptidylproline (omega=0). With respect to regulation, inhibited by both FK506 and rapamycin. PPIases accelerate the folding of proteins. It catalyzes the cis-trans isomerization of proline imidic peptide bonds in oligopeptides. This is FK506-binding protein 2 (FPR2) from Gibberella zeae (strain ATCC MYA-4620 / CBS 123657 / FGSC 9075 / NRRL 31084 / PH-1) (Wheat head blight fungus).